The following is a 336-amino-acid chain: Galactose/methyl galactoside import permease protein MglC (336 aa).

Transmembrane regions (helical) follow at residues 17–37 (AIYFVLLILLGIIIAQDPTFL), 53–73 (LIIALGVAGLLITQGTDLSAG), 107–127 (VVILAVCAIGAVIGLVNGLVI), 128–148 (AYLNVTPFIATMGTMIIIYGF), 181–201 (FKLSYITIYAAIAALLVWIMW), 231–251 (LVAIYMIAGMFYAFGGMLEAG), 257–277 (TNNLGFMYELDAIAACVVGGV), and 306–326 (IGVNPYWQYIIKGSIIILAVA).

This sequence belongs to the binding-protein-dependent transport system permease family. AraH/RbsC subfamily. As to quaternary structure, the complex is composed of one ATP-binding protein (MglA), two transmembrane proteins (MglC) and a solute-binding protein (MglB).

It localises to the cell inner membrane. Its function is as follows. Part of the ABC transporter complex MglABC involved in galactose/methyl galactoside import. Probably responsible for the translocation of the substrate across the membrane. This is Galactose/methyl galactoside import permease protein MglC (mglC) from Haemophilus influenzae (strain ATCC 51907 / DSM 11121 / KW20 / Rd).